The sequence spans 1235 residues: ATP-dependent helicase/nuclease subunit A (1235 aa).

The 473-residue stretch at 10-482 (SIWTDDQWSA…IDLNQNFRSR (473 aa)) folds into the UvrD-like helicase ATP-binding domain. Residue 31–38 (AAAGSGKT) participates in ATP binding. The 291-residue stretch at 509-799 (QAALKLGASY…RLMTIHSSKG (291 aa)) folds into the UvrD-like helicase C-terminal domain.

It belongs to the helicase family. AddA subfamily. In terms of assembly, heterodimer of AddA and AddB/RexB. Requires Mg(2+) as cofactor.

The catalysed reaction is Couples ATP hydrolysis with the unwinding of duplex DNA by translocating in the 3'-5' direction.. It carries out the reaction ATP + H2O = ADP + phosphate + H(+). Its function is as follows. The heterodimer acts as both an ATP-dependent DNA helicase and an ATP-dependent, dual-direction single-stranded exonuclease. Recognizes the chi site generating a DNA molecule suitable for the initiation of homologous recombination. The AddA nuclease domain is required for chi fragment generation; this subunit has the helicase and 3' -&gt; 5' nuclease activities. This is ATP-dependent helicase/nuclease subunit A from Bacillus velezensis (strain DSM 23117 / BGSC 10A6 / LMG 26770 / FZB42) (Bacillus amyloliquefaciens subsp. plantarum).